The sequence spans 793 residues: Putative dipeptidyl aminopeptidase C2E11.08 (793 aa).

The Cytoplasmic portion of the chain corresponds to 1–24 (MNDFSFEDKGLISRSGFGSRHVRR). The chain crosses the membrane as a helical; Signal-anchor for type II membrane protein span at residues 25-45 (VVKALALIFSLLILYLTISNV). Topologically, residues 46–793 (SDSPPKRDSL…STGVRQHRWD (748 aa)) are lumenal. Asparagine 101, asparagine 136, asparagine 246, asparagine 299, asparagine 303, asparagine 324, asparagine 336, asparagine 377, asparagine 384, asparagine 407, and asparagine 535 each carry an N-linked (GlcNAc...) asparagine glycan. Catalysis depends on charge relay system residues serine 647, aspartate 722, and histidine 755. The N-linked (GlcNAc...) asparagine glycan is linked to asparagine 761.

Belongs to the peptidase S9B family.

It is found in the vacuole membrane. The polypeptide is Putative dipeptidyl aminopeptidase C2E11.08 (Schizosaccharomyces pombe (strain 972 / ATCC 24843) (Fission yeast)).